Here is a 320-residue protein sequence, read N- to C-terminus: tRNA uridine(34) hydroxylase (320 aa).

The 95-residue stretch at 123–217 (EDEDTVILDA…YGKDPETKGQ (95 aa)) folds into the Rhodanese domain. C177 functions as the Cysteine persulfide intermediate in the catalytic mechanism.

Belongs to the TrhO family.

The enzyme catalyses uridine(34) in tRNA + AH2 + O2 = 5-hydroxyuridine(34) in tRNA + A + H2O. Functionally, catalyzes oxygen-dependent 5-hydroxyuridine (ho5U) modification at position 34 in tRNAs. This Staphylococcus haemolyticus (strain JCSC1435) protein is tRNA uridine(34) hydroxylase.